The chain runs to 465 residues: Probable glucan endo-1,3-beta-glucosidase eglC (465 aa).

A signal peptide spans 1–19 (MFTKTQILALALSIASAEA). Residue Glu-128 is the Proton donor of the active site. Asn-183 carries an N-linked (GlcNAc...) asparagine glycan. Glu-239 (nucleophile) is an active-site residue. N-linked (GlcNAc...) asparagine glycosylation is present at Asn-318. 2 stretches are compositionally biased toward low complexity: residues 320–333 (SSASASASGSSAQS) and 380–438 (SPSA…ATPA). 2 disordered regions span residues 320 to 356 (SSASASASGSSAQSTGFVSTTKPAASPSGSSGLGHGG) and 380 to 440 (SPSA…PADF). Residue Gly-442 is the site of GPI-anchor amidated glycine attachment. The propeptide at 443–465 (AGSRLSGSIFGAAMLVAALAVAL) is removed in mature form.

Belongs to the glycosyl hydrolase 17 family. The GPI-anchor is attached to the protein in the endoplasmic reticulum and serves to target the protein to the cell surface. There, the glucosamine-inositol phospholipid moiety is cleaved off and the GPI-modified mannoprotein is covalently attached via its lipidless GPI glycan remnant to the 1,6-beta-glucan of the outer cell wall layer.

It is found in the cell membrane. The protein localises to the secreted. It localises to the cell wall. The catalysed reaction is Hydrolysis of (1-&gt;3)-beta-D-glucosidic linkages in (1-&gt;3)-beta-D-glucans.. Glucanases play a role in cell expansion during growth, in cell-cell fusion during mating, and in spore release during sporulation. This enzyme may be involved in beta-glucan degradation and also function biosynthetically as a transglycosylase. The chain is Probable glucan endo-1,3-beta-glucosidase eglC (eglC) from Emericella nidulans (strain FGSC A4 / ATCC 38163 / CBS 112.46 / NRRL 194 / M139) (Aspergillus nidulans).